Reading from the N-terminus, the 83-residue chain is UPF0297 protein CLK_1948 (83 aa).

This sequence belongs to the UPF0297 family.

This chain is UPF0297 protein CLK_1948, found in Clostridium botulinum (strain Loch Maree / Type A3).